We begin with the raw amino-acid sequence, 443 residues long: Cell division protein FtsA (443 aa).

The protein belongs to the FtsA/MreB family. As to quaternary structure, self-interacts. Interacts with FtsZ.

The protein resides in the cell inner membrane. In terms of biological role, cell division protein that is involved in the assembly of the Z ring. May serve as a membrane anchor for the Z ring. This Agrobacterium fabrum (strain C58 / ATCC 33970) (Agrobacterium tumefaciens (strain C58)) protein is Cell division protein FtsA.